We begin with the raw amino-acid sequence, 668 residues long: DNA ligase (668 aa).

NAD(+) contacts are provided by residues 32-36 (DAEYD), 81-82 (SL), and glutamate 113. Lysine 115 serves as the catalytic N6-AMP-lysine intermediate. NAD(+) is bound by residues arginine 136, glutamate 173, lysine 289, and lysine 313. The Zn(2+) site is built by cysteine 407, cysteine 410, cysteine 425, and cysteine 431. The BRCT domain maps to 590 to 668 (ASEQPFAGKT…EEELQQALQG (79 aa)).

The protein belongs to the NAD-dependent DNA ligase family. LigA subfamily. Requires Mg(2+) as cofactor. The cofactor is Mn(2+).

It catalyses the reaction NAD(+) + (deoxyribonucleotide)n-3'-hydroxyl + 5'-phospho-(deoxyribonucleotide)m = (deoxyribonucleotide)n+m + AMP + beta-nicotinamide D-nucleotide.. In terms of biological role, DNA ligase that catalyzes the formation of phosphodiester linkages between 5'-phosphoryl and 3'-hydroxyl groups in double-stranded DNA using NAD as a coenzyme and as the energy source for the reaction. It is essential for DNA replication and repair of damaged DNA. This chain is DNA ligase, found in Aeromonas hydrophila subsp. hydrophila (strain ATCC 7966 / DSM 30187 / BCRC 13018 / CCUG 14551 / JCM 1027 / KCTC 2358 / NCIMB 9240 / NCTC 8049).